The sequence spans 417 residues: Cysteate synthase (417 aa).

Lys-102 carries the post-translational modification N6-(pyridoxal phosphate)lysine. 2 residues coordinate pyridoxal 5'-phosphate: Asn-128 and Thr-380.

This sequence belongs to the threonine synthase family. Cysteate synthase subfamily. Homotrimer. Pyridoxal 5'-phosphate serves as cofactor.

It catalyses the reaction O-phospho-L-serine + sulfite + H(+) = L-cysteate + phosphate. Its pathway is cofactor biosynthesis; coenzyme M biosynthesis. In terms of biological role, specifically catalyzes the beta-elimination of phosphate from L-phosphoserine and the beta-addition of sulfite to the dehydroalanine intermediate to produce L-cysteate. The sequence is that of Cysteate synthase from Methanocella arvoryzae (strain DSM 22066 / NBRC 105507 / MRE50).